The sequence spans 86 residues: Large ribosomal subunit protein bL31B (86 aa).

It belongs to the bacterial ribosomal protein bL31 family. Type B subfamily. As to quaternary structure, part of the 50S ribosomal subunit.

The polypeptide is Large ribosomal subunit protein bL31B (Saccharopolyspora erythraea (strain ATCC 11635 / DSM 40517 / JCM 4748 / NBRC 13426 / NCIMB 8594 / NRRL 2338)).